A 152-amino-acid polypeptide reads, in one-letter code: Stigma-specific STIG1-like protein 1 (152 aa).

The signal sequence occupies residues 1–19 (MAFVKLLVSIAITTAITIA).

The protein belongs to the STIG1 family.

The sequence is that of Stigma-specific STIG1-like protein 1 from Arabidopsis thaliana (Mouse-ear cress).